A 257-amino-acid polypeptide reads, in one-letter code: Large ribosomal subunit protein uL2 (257 aa).

Glycyl lysine isopeptide (Lys-Gly) (interchain with G-Cter in SUMO2) cross-links involve residues Lys-42 and Lys-149. Residues 207-232 (VEHPFGGGNHQHIGKPSTIRRDAPAG) form a disordered region. His-216 is modified ((3S)-3-hydroxyhistidine). Residues Lys-234 and Lys-250 each participate in a glycyl lysine isopeptide (Lys-Gly) (interchain with G-Cter in SUMO2) cross-link.

The protein belongs to the universal ribosomal protein uL2 family. In terms of assembly, component of the large ribosomal subunit. Interacts with CRY1. In terms of processing, hydroxylated on His-216 by RIOX1. The modification is impaired by hypoxia.

It is found in the cytoplasm. Functionally, component of the large ribosomal subunit. The ribosome is a large ribonucleoprotein complex responsible for the synthesis of proteins in the cell. The chain is Large ribosomal subunit protein uL2 (RPL8) from Bos taurus (Bovine).